The following is a 264-amino-acid chain: Diphthine synthase (264 aa).

S-adenosyl-L-methionine is bound by residues leucine 10, aspartate 87, valine 90, 115–116, leucine 166, alanine 209, and histidine 234; that span reads SI.

The protein belongs to the diphthine synthase family. Homodimer.

The enzyme catalyses 2-[(3S)-amino-3-carboxypropyl]-L-histidyl-[translation elongation factor 2] + 3 S-adenosyl-L-methionine = diphthine-[translation elongation factor 2] + 3 S-adenosyl-L-homocysteine + 3 H(+). It functions in the pathway protein modification; peptidyl-diphthamide biosynthesis. Functionally, S-adenosyl-L-methionine-dependent methyltransferase that catalyzes the trimethylation of the amino group of the modified target histidine residue in translation elongation factor 2 (EF-2), to form an intermediate called diphthine. The three successive methylation reactions represent the second step of diphthamide biosynthesis. The protein is Diphthine synthase of Thermococcus kodakarensis (strain ATCC BAA-918 / JCM 12380 / KOD1) (Pyrococcus kodakaraensis (strain KOD1)).